The sequence spans 156 residues: Small ribosomal subunit protein uS7 (156 aa).

Belongs to the universal ribosomal protein uS7 family. As to quaternary structure, part of the 30S ribosomal subunit. Contacts proteins S9 and S11.

Functionally, one of the primary rRNA binding proteins, it binds directly to 16S rRNA where it nucleates assembly of the head domain of the 30S subunit. Is located at the subunit interface close to the decoding center, probably blocks exit of the E-site tRNA. The polypeptide is Small ribosomal subunit protein uS7 (Methylococcus capsulatus (strain ATCC 33009 / NCIMB 11132 / Bath)).